The primary structure comprises 320 residues: tRNA uridine(34) hydroxylase (320 aa).

The Rhodanese domain occupies 125–221 (KEKRPLLLDV…YGLKQGSEHW (97 aa)). Cysteine 181 acts as the Cysteine persulfide intermediate in catalysis.

It belongs to the TrhO family.

The catalysed reaction is uridine(34) in tRNA + AH2 + O2 = 5-hydroxyuridine(34) in tRNA + A + H2O. Catalyzes oxygen-dependent 5-hydroxyuridine (ho5U) modification at position 34 in tRNAs. The sequence is that of tRNA uridine(34) hydroxylase from Protochlamydia amoebophila (strain UWE25).